Consider the following 435-residue polypeptide: Acetylcholine receptor-like protein cup-4 (435 aa).

The first 24 residues, 1–24 (MRLLLIFTVIFVFYLAILKRDVNA), serve as a signal peptide directing secretion. N41, N68, N237, and N249 each carry an N-linked (GlcNAc...) asparagine glycan. Transmembrane regions (helical) follow at residues 298 to 318 (VSFF…AIYL) and 341 to 361 (ITLF…HGVL). A glycan (N-linked (GlcNAc...) asparagine) is linked at N403. A helical transmembrane segment spans residues 413–433 (PLAGLAMFVYFVIMFILYLVV).

The protein belongs to the ligand-gated ion channel (TC 1.A.9) family. Acetylcholine receptor (TC 1.A.9.1) subfamily.

The protein localises to the cytoplasmic vesicle membrane. Functionally, thought to regulate endocytosis in coelomocytes through modulation of phospholipase C activity. Possible acetylcholine receptor. This Caenorhabditis briggsae protein is Acetylcholine receptor-like protein cup-4.